Reading from the N-terminus, the 86-residue chain is Putative regulatory protein OB1501 (86 aa).

Belongs to the RemA family.

This chain is Putative regulatory protein OB1501, found in Oceanobacillus iheyensis (strain DSM 14371 / CIP 107618 / JCM 11309 / KCTC 3954 / HTE831).